A 224-amino-acid polypeptide reads, in one-letter code: UPF0758 protein PBPRA0202 (224 aa).

Residues valine 102–leucine 224 form the MPN domain. Positions 173, 175, and 186 each coordinate Zn(2+). The short motif at histidine 173–aspartate 186 is the JAMM motif element.

It belongs to the UPF0758 family.

The sequence is that of UPF0758 protein PBPRA0202 from Photobacterium profundum (strain SS9).